The primary structure comprises 215 residues: Cytochrome b6 (215 aa).

A helical membrane pass occupies residues 32-52 (IFYCLGGITLTCFLVQVATGF). Cysteine 35 serves as a coordination point for heme c. Histidine 86 and histidine 100 together coordinate heme b. 3 helical membrane-spanning segments follow: residues 90–110 (ASMM…TGGF), 116–136 (LTWV…VTGY), and 186–206 (LHTF…FPMI). Heme b is bound by residues histidine 187 and histidine 202.

It belongs to the cytochrome b family. PetB subfamily. In terms of assembly, the 4 large subunits of the cytochrome b6-f complex are cytochrome b6, subunit IV (17 kDa polypeptide, PetD), cytochrome f and the Rieske protein, while the 4 small subunits are PetG, PetL, PetM and PetN. The complex functions as a dimer. The cofactor is heme b. Heme c is required as a cofactor.

It localises to the plastid. It is found in the chloroplast thylakoid membrane. In terms of biological role, component of the cytochrome b6-f complex, which mediates electron transfer between photosystem II (PSII) and photosystem I (PSI), cyclic electron flow around PSI, and state transitions. The protein is Cytochrome b6 of Lactuca sativa (Garden lettuce).